The following is a 285-amino-acid chain: Bifunctional protein FolD (285 aa).

NADP(+) contacts are provided by residues 166–168 (GAS) and Ile232.

The protein belongs to the tetrahydrofolate dehydrogenase/cyclohydrolase family. Homodimer.

It catalyses the reaction (6R)-5,10-methylene-5,6,7,8-tetrahydrofolate + NADP(+) = (6R)-5,10-methenyltetrahydrofolate + NADPH. The catalysed reaction is (6R)-5,10-methenyltetrahydrofolate + H2O = (6R)-10-formyltetrahydrofolate + H(+). It participates in one-carbon metabolism; tetrahydrofolate interconversion. Functionally, catalyzes the oxidation of 5,10-methylenetetrahydrofolate to 5,10-methenyltetrahydrofolate and then the hydrolysis of 5,10-methenyltetrahydrofolate to 10-formyltetrahydrofolate. The protein is Bifunctional protein FolD of Photobacterium profundum (strain SS9).